Consider the following 448-residue polypeptide: Tapasin (448 aa).

Residues Met-1–Ala-20 form the signal peptide. At Gly-21–Ile-414 the chain is on the lumenal side. A disulfide bridge connects residues Cys-27 and Cys-91. An N-linked (GlcNAc...) asparagine glycan is attached at Asn-253. The Ig-like C1-type domain maps to Pro-292–Thr-399. Cysteines 315 and 382 form a disulfide. Residues Gly-415–Val-435 traverse the membrane as a helical segment. Over Tyr-436–Glu-448 the chain is Cytoplasmic.

In terms of assembly, heterodimer with PDIA3; disulfide-linked. Obligatory mediator for the interaction between newly assembled MHC class I molecules, calreticulin, PDIA3 and TAP. Up to 4 MHC class I/tapasin complexes bind to 1 TAP. Interacts with HLA-G-B2M complex; this interaction is required for loading of high affinity peptides. On its own or as part of MHC class I peptide loading complex, interacts with ligand-free MR1 or MR1-B2M complex, providing for stable MR1 pools ready for metabolite antigen processing.

It is found in the endoplasmic reticulum membrane. In terms of biological role, involved in the association of MHC class I with transporter associated with antigen processing (TAP) and in the assembly of MHC class I with peptide (peptide loading). This is Tapasin (TAPBP) from Chlorocebus aethiops (Green monkey).